The following is a 208-amino-acid chain: MAKVSLFKQDGSQAGEVTLNDSVFGIEPNESVVFDVVISQRASLRQGTHAHKNRSAVSGGGKKPWRQKGTGRARQGSTRSPQWRGGGTVFGPNPRSYAYKLPQKVRQLALKSVYSTKVTDGKLIAVDTLDFAAPKTAEFAKVISALSIERKVLVVLPNEGNEFAELSARNLENVKVTTANSASVLDIVSADKLLVVQSALTQIEEVLA.

Residues 45–89 (RQGTHAHKNRSAVSGGGKKPWRQKGTGRARQGSTRSPQWRGGGTV) form a disordered region.

This sequence belongs to the universal ribosomal protein uL4 family. Part of the 50S ribosomal subunit.

One of the primary rRNA binding proteins, this protein initially binds near the 5'-end of the 23S rRNA. It is important during the early stages of 50S assembly. It makes multiple contacts with different domains of the 23S rRNA in the assembled 50S subunit and ribosome. In terms of biological role, forms part of the polypeptide exit tunnel. The sequence is that of Large ribosomal subunit protein uL4 from Lactococcus lactis subsp. cremoris (strain MG1363).